The following is a 382-amino-acid chain: UDP-4-amino-4-deoxy-L-arabinose--oxoglutarate aminotransferase (382 aa).

Lys182 carries the N6-(pyridoxal phosphate)lysine modification.

This sequence belongs to the DegT/DnrJ/EryC1 family. ArnB subfamily. As to quaternary structure, homodimer. Requires pyridoxal 5'-phosphate as cofactor.

The catalysed reaction is UDP-4-amino-4-deoxy-beta-L-arabinose + 2-oxoglutarate = UDP-beta-L-threo-pentopyranos-4-ulose + L-glutamate. The protein operates within nucleotide-sugar biosynthesis; UDP-4-deoxy-4-formamido-beta-L-arabinose biosynthesis; UDP-4-deoxy-4-formamido-beta-L-arabinose from UDP-alpha-D-glucuronate: step 2/3. It functions in the pathway bacterial outer membrane biogenesis; lipopolysaccharide biosynthesis. In terms of biological role, catalyzes the conversion of UDP-4-keto-arabinose (UDP-Ara4O) to UDP-4-amino-4-deoxy-L-arabinose (UDP-L-Ara4N). The modified arabinose is attached to lipid A and is required for resistance to polymyxin and cationic antimicrobial peptides. This chain is UDP-4-amino-4-deoxy-L-arabinose--oxoglutarate aminotransferase, found in Pectobacterium carotovorum subsp. carotovorum (strain PC1).